Here is a 458-residue protein sequence, read N- to C-terminus: MEFDTIAAISTALGEGAIAIVRVSGDDAVEKVNRIFKGKDLTEVPSHTIHYGHIVDLDTNQVIEEVMVSIMRAPRTFTRENIVEINCHGGLVSVNKVLQLILAQGVRLAEPGEFTKRAFLNGRIDLSQAEAVMDLIRAKTDRAMNVAINQMEGRLSKLIGRLRQDILETLAHVEVNIDYPEYDDVEEMTHNILIEKATHVRAEIAKILETSKQGKILREGIATAIIGRPNVGKSSLLNSLVQEKKAIVTDIAGTTRDVIEEYVNVRGVPLKLIDTAGIRETEDVVERIGVERSKEMMSQADLVLVVVNYSEALTNEDEELFRAVQGKDFIVIVNKTDLPQAIDMERVIELAAGNRVITTSLIEEQGIDELEKAIADLFFEGTIDSADVTYVSNARHIGLLTQAGKTIGDAIEAIENGVPIDMVQIDLTRTWEILGEITGDTVHESLIDQLFSQFCLGK.

3 residues coordinate (6S)-5-formyl-5,6,7,8-tetrahydrofolate: arginine 22, glutamate 84, and arginine 123. In terms of domain architecture, TrmE-type G spans glycine 220 to phenylalanine 379. Asparagine 230 is a K(+) binding site. Residues asparagine 230–serine 235, threonine 249–threonine 255, and aspartate 274–glycine 277 each bind GTP. Residue serine 234 coordinates Mg(2+). Positions 249, 251, and 254 each coordinate K(+). Position 255 (threonine 255) interacts with Mg(2+). Lysine 458 is a (6S)-5-formyl-5,6,7,8-tetrahydrofolate binding site.

It belongs to the TRAFAC class TrmE-Era-EngA-EngB-Septin-like GTPase superfamily. TrmE GTPase family. As to quaternary structure, homodimer. Heterotetramer of two MnmE and two MnmG subunits. The cofactor is K(+).

The protein localises to the cytoplasm. Exhibits a very high intrinsic GTPase hydrolysis rate. Involved in the addition of a carboxymethylaminomethyl (cmnm) group at the wobble position (U34) of certain tRNAs, forming tRNA-cmnm(5)s(2)U34. This chain is tRNA modification GTPase MnmE, found in Bacillus cereus (strain ZK / E33L).